A 273-amino-acid chain; its full sequence is MGQKVTGGIKTVDMRDPTYRPLKQELQGLDYCKPTRLDLLLDMPPVSYDVQLLHSWNNNDRSLNVFVKEDDKLIFHRHPVAQSTDAIRGKVGYTRGLHVWQITWAMRQRGTHAVVGVATADAPLHSVGYTTLVGNNHESWGWDLGRNRLYHDGKNQPSKTYPAFLEPDETFIVPDSFLVALDMDDGTLSFIVDGQYMGVAFRGLKGKKLYPVVSAVWGHCEIRMRYLNGLDPEPLPLMDLCRRSVRLALGRERLGEIHTLPLPASLKAYLLYQ.

The residue at position 31 (Y31) is a Phosphotyrosine; by MET. Residues 33–231 (KPTRLDLLLD…IRMRYLNGLD (199 aa)) form the B30.2/SPRY domain. The 42-residue stretch at 232–273 (PEPLPLMDLCRRSVRLALGRERLGEIHTLPLPASLKAYLLYQ) folds into the SOCS box domain.

This sequence belongs to the SPSB family. Component of the probable ECS(SPSB1) E3 ubiquitin-protein ligase complex which contains CUL5, RNF7/RBX2, Elongin BC complex and SPSB1. Interacts with CUL5, RNF7, ELOB and ELOC. Directly interacts with MET tyrosine kinase domain in the presence and in the absence of HGF, however HGF treatment has a positive effect on this interaction. When phosphorylated, interacts with RASA1 without affecting its stability. Interacts (via B30.2/SPRY domain) with PAWR; this interaction is direct and occurs in association with the Elongin BC complex. Interacts with NOS2. Interacts with EPHB2.

It localises to the cytoplasm. It is found in the cytosol. Its pathway is protein modification; protein ubiquitination. In terms of biological role, substrate recognition component of a SCF-like ECS (Elongin BC-CUL2/5-SOCS-box protein) E3 ubiquitin-protein ligase complex which mediates the ubiquitination and subsequent proteasomal degradation of target proteins. Negatively regulates nitric oxide (NO) production and limits cellular toxicity in activated macrophages by mediating the ubiquitination and proteasomal degradation of NOS2. Acts as a bridge which links NOS2 with the ECS E3 ubiquitin ligase complex components ELOC and CUL5. This is SPRY domain-containing SOCS box protein 1 (SPSB1) from Homo sapiens (Human).